The primary structure comprises 561 residues: DNA ligase B (561 aa).

The active-site N6-AMP-lysine intermediate is Lys125.

This sequence belongs to the NAD-dependent DNA ligase family. LigB subfamily.

It catalyses the reaction NAD(+) + (deoxyribonucleotide)n-3'-hydroxyl + 5'-phospho-(deoxyribonucleotide)m = (deoxyribonucleotide)n+m + AMP + beta-nicotinamide D-nucleotide.. In terms of biological role, catalyzes the formation of phosphodiester linkages between 5'-phosphoryl and 3'-hydroxyl groups in double-stranded DNA using NAD as a coenzyme and as the energy source for the reaction. This is DNA ligase B from Salmonella paratyphi B (strain ATCC BAA-1250 / SPB7).